The primary structure comprises 183 residues: MVVGIEGIITKKEPTFIIVKCASGLSYGIFISLFCSAKIQTQEKHEFFITQIIKEDSNKFYGFLDKDEQKMFEMLLKVNGVGANTAMAVCSSLDINSFYKALSLGDESVLKKVPGIGPKSAKRIIVELSDTRTKLENVSDDKSEALAALLTLGFKQEKIISVLASAQATGTSELIKEALKKLR.

A domain I region spans residues M1–L64. A domain II region spans residues D65–S139. S139 is a region of interest (flexible linker). Positions S139 to R183 are domain III.

The protein belongs to the RuvA family. As to quaternary structure, homotetramer. Forms an RuvA(8)-RuvB(12)-Holliday junction (HJ) complex. HJ DNA is sandwiched between 2 RuvA tetramers; dsDNA enters through RuvA and exits via RuvB. An RuvB hexamer assembles on each DNA strand where it exits the tetramer. Each RuvB hexamer is contacted by two RuvA subunits (via domain III) on 2 adjacent RuvB subunits; this complex drives branch migration. In the full resolvosome a probable DNA-RuvA(4)-RuvB(12)-RuvC(2) complex forms which resolves the HJ.

The protein resides in the cytoplasm. In terms of biological role, the RuvA-RuvB-RuvC complex processes Holliday junction (HJ) DNA during genetic recombination and DNA repair, while the RuvA-RuvB complex plays an important role in the rescue of blocked DNA replication forks via replication fork reversal (RFR). RuvA specifically binds to HJ cruciform DNA, conferring on it an open structure. The RuvB hexamer acts as an ATP-dependent pump, pulling dsDNA into and through the RuvAB complex. HJ branch migration allows RuvC to scan DNA until it finds its consensus sequence, where it cleaves and resolves the cruciform DNA. The sequence is that of Holliday junction branch migration complex subunit RuvA from Campylobacter jejuni subsp. doylei (strain ATCC BAA-1458 / RM4099 / 269.97).